A 270-amino-acid polypeptide reads, in one-letter code: MSDLHNESIFITGGGSGLGLALVERFIEKGAQVATLELSAAKVASLRQRFGEHILAVEGNVTCYADYQRAVDQILTRSGKLDCFIGNAGIWDHNASLVNTPAETLETGFHELFNVNVLGYLLGAKACAPALIASEGSMIFTLSNAAWYPGGGGPLYTASKHAATGLIRQLAYELAPKVRVNGVGPCGMASDLRGPQALGQSETSIMQSLTPEKIAAILPLQFFPQPADFTGPYVMLTSRRNNRALSGVMINADAGLAIRGIRHVAAGLDL.

Phe-10–Ala-34 contacts NAD(+). Ser-143 contributes to the substrate binding site. The active-site Proton acceptor is the Tyr-156.

This sequence belongs to the short-chain dehydrogenases/reductases (SDR) family.

It carries out the reaction 3-(cis-5,6-dihydroxycyclohexa-1,3-dien-1-yl)propanoate + NAD(+) = 3-(2,3-dihydroxyphenyl)propanoate + NADH + H(+). The catalysed reaction is (2E)-3-(cis-5,6-dihydroxycyclohexa-1,3-dien-1-yl)prop-2-enoate + NAD(+) = (2E)-3-(2,3-dihydroxyphenyl)prop-2-enoate + NADH + H(+). It participates in aromatic compound metabolism; 3-phenylpropanoate degradation. Its function is as follows. Converts 3-phenylpropionate-dihydrodiol (PP-dihydrodiol) and cinnamic acid-dihydrodiol (CI-dihydrodiol) into 3-(2,3-dihydroxylphenyl)propanoic acid (DHPP) and 2,3-dihydroxicinnamic acid (DHCI), respectively. This Escherichia coli protein is 3-phenylpropionate-dihydrodiol/cinnamic acid-dihydrodiol dehydrogenase (hcaB).